The chain runs to 260 residues: E3 ubiquitin-protein ligase SRFP1 (260 aa).

A CHY-type zinc finger spans residues 11-80 (FGRMGFGCKH…VAQVCYNCGV (70 aa)). Positions 18, 20, 31, 32, 38, 41, 42, 50, 62, 65, 75, 78, 87, 90, 103, 104, 107, 110, 120, 121, 124, 127, 136, and 138 each coordinate Zn(2+). A CTCHY-type zinc finger spans residues 82–146 (MGEYFCSACK…CCIENSMKNN (65 aa)). The RING-type; atypical zinc finger occupies 147-190 (CPICYEYLFDSLRETSVLRCGHTMHLQCFHEMLKHDKFSCPICS).

As to expression, expressed in roots, leaves, nodes and panicles.

The protein resides in the nucleus. It localises to the cytoplasm. It catalyses the reaction S-ubiquitinyl-[E2 ubiquitin-conjugating enzyme]-L-cysteine + [acceptor protein]-L-lysine = [E2 ubiquitin-conjugating enzyme]-L-cysteine + N(6)-ubiquitinyl-[acceptor protein]-L-lysine.. It participates in protein modification; protein ubiquitination. In terms of biological role, possesses E3 ubiquitin-protein ligase activity in vitro. Possesses transactivation activity in yeast cells. May modulate abiotic stress responses by negatively regulating antioxidant enzymes-mediated reactive oxygen species (ROS) removal. The sequence is that of E3 ubiquitin-protein ligase SRFP1 from Oryza sativa subsp. japonica (Rice).